Consider the following 238-residue polypeptide: Ribonuclease 3 (238 aa).

One can recognise an RNase III domain in the interval 4–134; it reads PRQALLDAFG…LLGAIYLHHG (131 aa). E44 serves as a coordination point for Mg(2+). D48 is a catalytic residue. Mg(2+)-binding residues include D120 and E123. E123 is an active-site residue. One can recognise a DRBM domain in the interval 161 to 229; that stretch reads DWKTSLQELT…ASAAWKALDV (69 aa).

Belongs to the ribonuclease III family. In terms of assembly, homodimer. Mg(2+) is required as a cofactor.

It localises to the cytoplasm. The catalysed reaction is Endonucleolytic cleavage to 5'-phosphomonoester.. Functionally, digests double-stranded RNA. Involved in the processing of primary rRNA transcript to yield the immediate precursors to the large and small rRNAs (23S and 16S). Processes some mRNAs, and tRNAs when they are encoded in the rRNA operon. Processes pre-crRNA and tracrRNA of type II CRISPR loci if present in the organism. The sequence is that of Ribonuclease 3 from Mycobacterium leprae (strain TN).